A 172-amino-acid polypeptide reads, in one-letter code: Thioredoxin M5, chloroplastic (172 aa).

A chloroplast-targeting transit peptide spans 1–59 (MALETCFRAWATLHAPQPPSSGGSRDRLLLSGAGSSQSKPRLSVASPSPLRPASRFACQ). The tract at residues 17–47 (QPPSSGGSRDRLLLSGAGSSQSKPRLSVASP) is disordered. Residues 60 to 171 (CSNVVDEVVV…LATIIDKYVS (112 aa)) enclose the Thioredoxin domain. Catalysis depends on nucleophile residues cysteine 95 and cysteine 98. Residues cysteine 95 and cysteine 98 are joined by a disulfide bond.

Belongs to the thioredoxin family. Plant M-type subfamily. Expressed in leaves and at lower levels in flowers.

It is found in the plastid. The protein localises to the chloroplast. Its function is as follows. Thiol-disulfide oxidoreductase probably involved in the redox regulation of chloroplastic enzymes. Required for chloroplast biogenesis and differentiation. Functions as an electron donor for plastidial 2-Cys peroxiredoxins and participates in hydrogen peroxide scavenging system in chloroplasts. Possesses reducing activity towards insulin disulfide bonds. The polypeptide is Thioredoxin M5, chloroplastic (TRXM) (Oryza sativa subsp. japonica (Rice)).